Reading from the N-terminus, the 1406-residue chain is Ubiquitin carboxyl-terminal hydrolase 6 (1406 aa).

One can recognise a Rab-GAP TBC domain in the interval 100–292 (GIPMNIRGPV…RLWDVYLVEG (193 aa)). The interval 348–380 (KLTRKQGDLPPPAKREQGSLAPRPVPASRGGKT) is disordered. Positions 532-1369 (TGLSNLGNTC…SAYILFYEQQ (838 aa)) constitute a USP domain. Cys541 serves as the catalytic Nucleophile. Residues 1120–1231 (HKPLTPQGDE…KKNLDASKEN (112 aa)) form a disordered region. Residues 1129-1155 (ELSKPRILAREVKKVDAQSSAGKEDML) show a composition bias toward basic and acidic residues. The span at 1156–1197 (LSKSPSSLSANISSSPKGSPSSSRKSGTSCPSSKNSSPNSSP) shows a compositional bias: low complexity. His1328 (proton acceptor) is an active-site residue. Residues 1384-1406 (KMADTSSTDEDSESDYEKYSMLQ) form a disordered region.

The protein belongs to the peptidase C19 family. Interacts with RAC1 and CDC42. Interacts (via Rab-GAP TBC domain) with ARF6. Interacts with calmodulin (CALM1, CALM2 and/or CALM3); the interaction is calcium-dependent. Post-translationally, monubiquitinated; ubiquitination is calmodulin and calcium dependent. As to expression, testis specific. Expressed in various cancer cell lines.

The protein resides in the cell membrane. It is found in the cytoplasm. The protein localises to the endosome. It carries out the reaction Thiol-dependent hydrolysis of ester, thioester, amide, peptide and isopeptide bonds formed by the C-terminal Gly of ubiquitin (a 76-residue protein attached to proteins as an intracellular targeting signal).. Its function is as follows. Deubiquitinase with an ATP-independent isopeptidase activity, cleaving at the C-terminus of the ubiquitin moiety. Catalyzes its own deubiquitination. In vitro, isoform 2, but not isoform 3, shows deubiquitinating activity. Promotes plasma membrane localization of ARF6 and selectively regulates ARF6-dependent endocytic protein trafficking. Is able to initiate tumorigenesis by inducing the production of matrix metalloproteinases following NF-kappa-B activation. May act as a GTPase-activating protein for RAB3A. This is Ubiquitin carboxyl-terminal hydrolase 6 (USP6) from Homo sapiens (Human).